Consider the following 464-residue polypeptide: Heterogeneous nuclear ribonucleoprotein K (464 aa).

M1 is subject to N-acetylmethionine. The segment at 1 to 37 (METEQPEETFPNTETNGEFGKRPAEDMEEEQAFKRSR) is disordered. The interval 1–276 (METEQPEETF…GRGGRPMPPS (276 aa)) is necessary for interaction with DDX1. Residues 19–37 (FGKRPAEDMEEEQAFKRSR) are compositionally biased toward basic and acidic residues. K34 is modified (N6-acetyllysine; alternate). Residue K34 forms a Glycyl lysine isopeptide (Lys-Gly) (interchain with G-Cter in SUMO1); alternate linkage. K34 is covalently cross-linked (Glycyl lysine isopeptide (Lys-Gly) (interchain with G-Cter in SUMO2); alternate). Residue S36 is modified to Phosphoserine. T39 bears the Phosphothreonine mark. A KH 1 domain is found at 42 to 104 (MVELRILLQS…ETIGEILKKI (63 aa)). Glycyl lysine isopeptide (Lys-Gly) (interchain with G-Cter in SUMO2) cross-links involve residues K52 and K60. 2 repeat units span residues 54-76 (AGAVIGKGGKNIKALRTDYNASV) and 59-62 (GKGG). The interval 54-421 (AGAVIGKGGK…QIRHESGASI (368 aa)) is 2 X 22 AA approximate repeats. The interval 59 to 407 (GKGGKNIKAL…LAGSIIGKGG (349 aa)) is 5 X 4 AA repeats of G-X-G-G. Phosphoserine is present on residues S75 and S116. A KH 2 domain is found at 144-209 (DCELRLLIHQ…DRVVECIKII (66 aa)). A Glycyl lysine isopeptide (Lys-Gly) (interchain with G-Cter in SUMO1); alternate cross-link involves residue K163. Residue K163 forms a Glycyl lysine isopeptide (Lys-Gly) (interchain with G-Cter in SUMO2); alternate linkage. An N6-acetyllysine modification is found at K198. A phosphoserine mark is found at S214 and S216. A Glycyl lysine isopeptide (Lys-Gly) (interchain with G-Cter in SUMO2); alternate cross-link involves residue K219. K219 carries the post-translational modification N6-succinyllysine; alternate. Positions 236 to 273 (YGGFTMMFDDRRGRPVGFPMRGRGGFDRMPPGRGGRPM) are RNA-binding RGG-box. 3 consecutive repeat copies span residues 245–250 (DRRGRP), 257–260 (GRGG), and 267–270 (GRGG). Residues 245–329 (DRRGRPVGFP…LMAYDRRGRP (85 aa)) form a 2 X 6 AA approximate repeats region. A disordered region spans residues 250–329 (PVGFPMRGRG…LMAYDRRGRP (80 aa)). The span at 252–266 (GFPMRGRGGFDRMPP) shows a compositional bias: low complexity. A compositionally biased stretch (basic and acidic residues) spans 276–285 (SRRDYDDMSP). S284 bears the Phosphoserine mark. One copy of the 3-4 repeat lies at 295–298 (GRGG). The residue at position 316 (R316) is an Omega-N-methylarginine. The stretch at 324 to 329 (DRRGRP) is one 2-2 repeat. An Omega-N-methylarginine modification is found at R377. Position 379 is a phosphoserine (S379). Y380 is subject to Phosphotyrosine. The region spanning 387 to 451 (IITTQVTIPK…DQIQNAQYLL (65 aa)) is the KH 3 domain. Tandem repeats lie at residues 399–421 (AGSIIGKGGQRIKQIRHESGASI) and 404–407 (GKGG). At K405 the chain carries N6-acetyllysine; alternate. A Glycyl lysine isopeptide (Lys-Gly) (interchain with G-Cter in SUMO2); alternate cross-link involves residue K405. S420 is modified (phosphoserine). Residue K422 forms a Glycyl lysine isopeptide (Lys-Gly) (interchain with G-Cter in SUMO1); alternate linkage. A Glycyl lysine isopeptide (Lys-Gly) (interchain with G-Cter in SUMO2); alternate cross-link involves residue K422. Residue K422 forms a Glycyl lysine isopeptide (Lys-Gly) (interchain with G-Cter in SUMO); alternate linkage.

As to quaternary structure, identified in the spliceosome C complex. Interacts with ANKRD28, RBM42 and ZIK1. Interacts with DDX1. Interacts with MDM2; this interaction leads to ubiquitination and proteasomal degradation. Interacts with p53/TP53. Interacts with BRDT. Interacts with IVNS1ABP. Interacts with PPIA/CYPA. Part of a transcription inhibitory ribonucleoprotein complex composed at least of the circular RNA circZNF827, ZNF827 and HNRNPL. Sumoylated by CBX4. Sumoylation is increased upon DNA damage, such as that produced by doxorubicin, etoposide, UV light and camptothecin, due to enhanced CBX4 phosphorylation by HIPK2 under these conditions. Post-translationally, ubiquitinated by MDM2. Doxorubicin treatment does not affect monoubiquitination, but slightly decreases HNRNPK poly-ubiquitination. In terms of processing, O-glycosylated (O-GlcNAcylated), in a cell cycle-dependent manner.

The protein localises to the cytoplasm. The protein resides in the nucleus. It localises to the nucleoplasm. It is found in the cell projection. Its subcellular location is the podosome. Its function is as follows. One of the major pre-mRNA-binding proteins. Binds tenaciously to poly(C) sequences. Likely to play a role in the nuclear metabolism of hnRNAs, particularly for pre-mRNAs that contain cytidine-rich sequences. Can also bind poly(C) single-stranded DNA. Plays an important role in p53/TP53 response to DNA damage, acting at the level of both transcription activation and repression. When sumoylated, acts as a transcriptional coactivator of p53/TP53, playing a role in p21/CDKN1A and 14-3-3 sigma/SFN induction. As far as transcription repression is concerned, acts by interacting with long intergenic RNA p21 (lincRNA-p21), a non-coding RNA induced by p53/TP53. This interaction is necessary for the induction of apoptosis, but not cell cycle arrest. As part of a ribonucleoprotein complex composed at least of ZNF827, HNRNPL and the circular RNA circZNF827 that nucleates the complex on chromatin, may negatively regulate the transcription of genes involved in neuronal differentiation. The protein is Heterogeneous nuclear ribonucleoprotein K (HNRNPK) of Macaca fascicularis (Crab-eating macaque).